Consider the following 89-residue polypeptide: Small ribosomal subunit protein bS16 (89 aa).

This sequence belongs to the bacterial ribosomal protein bS16 family.

The chain is Small ribosomal subunit protein bS16 from Nitrosomonas europaea (strain ATCC 19718 / CIP 103999 / KCTC 2705 / NBRC 14298).